A 386-amino-acid chain; its full sequence is uncharacterized protein (386 aa).

N6-(pyridoxal phosphate)lysine is present on K185.

Belongs to the DegT/DnrJ/EryC1 family. It depends on pyridoxal 5'-phosphate as a cofactor.

This is an uncharacterized protein from Methanocaldococcus jannaschii (strain ATCC 43067 / DSM 2661 / JAL-1 / JCM 10045 / NBRC 100440) (Methanococcus jannaschii).